The chain runs to 572 residues: NADP-dependent malic enzyme (572 aa).

Met1 is subject to N-acetylmethionine. Tyr102 serves as the catalytic Proton donor. Residue Arg155 participates in NADP(+) binding. Lys173 functions as the Proton acceptor in the catalytic mechanism. Residues Glu245, Asp246, and Asp269 each contribute to the a divalent metal cation site. Residues Asp269 and Gly301 to Glu318 contribute to the NADP(+) site. Ser336 carries the post-translational modification Phosphoserine. Asn408 lines the NADP(+) pocket.

The protein belongs to the malic enzymes family. Homotetramer. Mg(2+) is required as a cofactor. The cofactor is Mn(2+). In terms of tissue distribution, expressed in all tissues tested including liver, placenta and white adipose tissue.

It is found in the cytoplasm. The catalysed reaction is (S)-malate + NADP(+) = pyruvate + CO2 + NADPH. It carries out the reaction oxaloacetate + H(+) = pyruvate + CO2. Functionally, catalyzes the oxidative decarboxylation of (S)-malate in the presence of NADP(+) and divalent metal ions, and decarboxylation of oxaloacetate. The sequence is that of NADP-dependent malic enzyme from Homo sapiens (Human).